A 596-amino-acid polypeptide reads, in one-letter code: ATP-binding protein Uup (596 aa).

ABC transporter domains follow at residues 1-222 and 290-516; these read MSLI…RIEK and FKLD…SKIN. ATP-binding positions include 36-43 and 322-329; these read GKNGAGKS and GDNGCGKS. The tract at residues 519–596 is C-terminal domain (CTD), binds DNA; sequence IKIKNNFKKE…LEKNIINTKI (78 aa).

Belongs to the ABC transporter superfamily. ABCF family. Uup subfamily.

Its subcellular location is the cytoplasm. It catalyses the reaction ATP + H2O = ADP + phosphate + H(+). Functionally, probably plays a role in ribosome assembly or function. May be involved in resolution of branched DNA intermediates that result from template switching in postreplication gaps. Binds DNA and has ATPase activity. This Buchnera aphidicola subsp. Acyrthosiphon pisum (strain APS) (Acyrthosiphon pisum symbiotic bacterium) protein is ATP-binding protein Uup.